A 634-amino-acid chain; its full sequence is Leucine--tRNA ligase subunit alpha (634 aa).

The short motif at 43-51 (PSGRIHMGH) is the 'HIGH' region element.

The protein belongs to the class-I aminoacyl-tRNA synthetase family. As to quaternary structure, seems to consist of an alpha chain and a beta chain.

It localises to the cytoplasm. It carries out the reaction tRNA(Leu) + L-leucine + ATP = L-leucyl-tRNA(Leu) + AMP + diphosphate. The protein is Leucine--tRNA ligase subunit alpha (leuS) of Aquifex aeolicus (strain VF5).